The primary structure comprises 349 residues: Protein RecA (349 aa).

Position 65–72 (65–72) interacts with ATP; it reads GPESSGKT.

It belongs to the RecA family.

Its subcellular location is the cytoplasm. Functionally, can catalyze the hydrolysis of ATP in the presence of single-stranded DNA, the ATP-dependent uptake of single-stranded DNA by duplex DNA, and the ATP-dependent hybridization of homologous single-stranded DNAs. It interacts with LexA causing its activation and leading to its autocatalytic cleavage. The chain is Protein RecA from Vibrio vulnificus (strain CMCP6).